We begin with the raw amino-acid sequence, 1262 residues long: Ras-specific guanine nucleotide-releasing factor 1 (1262 aa).

Positions 22-130 (DGTRKGYLSK…WVAAIARASY (109 aa)) constitute a PH 1 domain. Phosphoserine; by PLK2 is present on Ser-71. In terms of domain architecture, IQ spans 208–233 (KKIKKVQSFLRGWLCRRKWKNIIQDY). A DH domain is found at 244–430 (KRNQVVFSML…EELSRIMHDE (187 aa)). The PH 2 domain occupies 460–588 (TFVRQGSLMQ…WTSDIIQCVD (129 aa)). A phosphoserine; by PLK2 mark is found at Ser-581 and Ser-617. One can recognise an N-terminal Ras-GEF domain in the interval 635 to 749 (KVLQIRYASV…RRRKLSLNIP (115 aa)). Residues 714–738 (DAPKSPRASRKFSSPPPLAIGTSSP) form a disordered region. Residue Ser-745 is modified to Phosphoserine. A Phosphoserine; by PLK2 modification is found at Ser-766. The segment at 800 to 854 (EEIDVPATIPEKPGELSASRKHSSDVLKEESEDDQNHSDEDNTEVSPVKSPPTPK) is disordered. The segment covering 821 to 839 (HSSDVLKEESEDDQNHSDE) has biased composition (basic and acidic residues). In terms of domain architecture, Ras-GEF spans 1027–1259 (PALEIAEQLT…YESSLLIEPK (233 aa)).

As to quaternary structure, homooligomer and heterooligomer with RASGRF2. Interacts with USP8, thereby regulating its stability. In terms of processing, phosphorylated by PLK2, leading to ubiquitination and degradation by the proteasome. Post-translationally, ubiquitinated and degraded following phosphorylation by PLK2. Phosphorylated by SRC and LCK. Phosphorylation by LCK increases its capacity to stimulate the GDP/GTP exchange on Ras, whereas its phosphorylation by SRC seems not to have an effect on stimulation activity. Brain.

Its function is as follows. Promotes the exchange of Ras-bound GDP by GTP. This Mus musculus (Mouse) protein is Ras-specific guanine nucleotide-releasing factor 1 (Rasgrf1).